The following is a 957-amino-acid chain: Glycine dehydrogenase (decarboxylating) 2 (957 aa).

At lysine 707 the chain carries N6-(pyridoxal phosphate)lysine.

This sequence belongs to the GcvP family. As to quaternary structure, the glycine cleavage system is composed of four proteins: P, T, L and H. Requires pyridoxal 5'-phosphate as cofactor.

The enzyme catalyses N(6)-[(R)-lipoyl]-L-lysyl-[glycine-cleavage complex H protein] + glycine + H(+) = N(6)-[(R)-S(8)-aminomethyldihydrolipoyl]-L-lysyl-[glycine-cleavage complex H protein] + CO2. The glycine cleavage system catalyzes the degradation of glycine. The P protein binds the alpha-amino group of glycine through its pyridoxal phosphate cofactor; CO(2) is released and the remaining methylamine moiety is then transferred to the lipoamide cofactor of the H protein. This chain is Glycine dehydrogenase (decarboxylating) 2 (gcvP2), found in Pseudomonas putida (strain ATCC 47054 / DSM 6125 / CFBP 8728 / NCIMB 11950 / KT2440).